The following is a 65-amino-acid chain: Large ribosomal subunit protein uL29 (65 aa).

Belongs to the universal ribosomal protein uL29 family.

In Mycoplasmopsis pulmonis (strain UAB CTIP) (Mycoplasma pulmonis), this protein is Large ribosomal subunit protein uL29.